The following is a 951-amino-acid chain: Valine--tRNA ligase (951 aa).

The 'HIGH' region signature appears at 42 to 52; the sequence is PNVTGSLHMGH. A 'KMSKS' region motif is present at residues 554-558; that stretch reads KMSKS. Lysine 557 is a binding site for ATP. Residues 880–944 are a coiled coil; sequence AGLINKEDEL…AEAKAKLIEQ (65 aa).

Belongs to the class-I aminoacyl-tRNA synthetase family. ValS type 1 subfamily. Monomer.

The protein resides in the cytoplasm. It carries out the reaction tRNA(Val) + L-valine + ATP = L-valyl-tRNA(Val) + AMP + diphosphate. In terms of biological role, catalyzes the attachment of valine to tRNA(Val). As ValRS can inadvertently accommodate and process structurally similar amino acids such as threonine, to avoid such errors, it has a 'posttransfer' editing activity that hydrolyzes mischarged Thr-tRNA(Val) in a tRNA-dependent manner. This Shigella boydii serotype 4 (strain Sb227) protein is Valine--tRNA ligase.